Here is a 285-residue protein sequence, read N- to C-terminus: Small ribosomal subunit protein uS3 (285 aa).

In terms of domain architecture, KH type-2 spans 39–107 (VREFLKKKLK…PVAVNIEEVR (69 aa)). A disordered region spans residues 211–285 (GDAPVMRGED…RAAPPAAKGE (75 aa)). Positions 217–241 (RGEDRPEDDRRRRNPRGDRPGDRRG) are enriched in basic and acidic residues. The segment covering 242–255 (PGAGRGGPGAGRGP) has biased composition (gly residues). 2 stretches are compositionally biased toward low complexity: residues 256 to 267 (ADGASAAPSGDA) and 276 to 285 (RAAPPAAKGE).

The protein belongs to the universal ribosomal protein uS3 family. As to quaternary structure, part of the 30S ribosomal subunit. Forms a tight complex with proteins S10 and S14.

Its function is as follows. Binds the lower part of the 30S subunit head. Binds mRNA in the 70S ribosome, positioning it for translation. The polypeptide is Small ribosomal subunit protein uS3 (Leptothrix cholodnii (strain ATCC 51168 / LMG 8142 / SP-6) (Leptothrix discophora (strain SP-6))).